The following is a 65-amino-acid chain: Metallothionein (65 aa).

The protein belongs to the metallothionein superfamily. Type 4 family.

In terms of biological role, metallothioneins have a high content of cysteine residues that bind various heavy metals. The polypeptide is Metallothionein (Paracentrotus lividus (Common sea urchin)).